A 322-amino-acid polypeptide reads, in one-letter code: ADP,ATP carrier protein (322 aa).

3 Solcar repeats span residues serine 25–methionine 118, lysine 130–valine 222, and glycine 230–leucine 316. The next 5 helical transmembrane spans lie at phenylalanine 27 to leucine 54, threonine 95 to phenylalanine 119, tyrosine 128 to leucine 148, phenylalanine 198 to leucine 219, and leucine 233 to leucine 253. ADP is bound by residues arginine 100 and lysine 112. Arginine 257 contacts ADP. The segment at arginine 257–methionine 262 is important for transport activity. A Nucleotide carrier signature motif motif is present at residues arginine 257–methionine 262. A helical transmembrane segment spans residues alanine 293–valine 313.

It belongs to the mitochondrial carrier (TC 2.A.29) family. Monomer.

Its subcellular location is the mitochondrion inner membrane. It catalyses the reaction ADP(in) + ATP(out) = ADP(out) + ATP(in). Its activity is regulated as follows. The matrix-open state (m-state) is inhibited by the membrane-permeable bongkrekic acid (BKA). The cytoplasmic-open state (c-state) is inhibited by the membrane-impermeable toxic inhibitor carboxyatractyloside (CATR). In terms of biological role, ADP:ATP antiporter that mediates import of ADP into the mitochondrial matrix for ATP synthesis, and export of ATP out to fuel the cell. Cycles between the cytoplasmic-open state (c-state) and the matrix-open state (m-state): operates by the alternating access mechanism with a single substrate-binding site intermittently exposed to either the cytosolic (c-state) or matrix (m-state) side of the inner mitochondrial membrane. This is ADP,ATP carrier protein (anc1) from Schizosaccharomyces pombe (strain 972 / ATCC 24843) (Fission yeast).